The chain runs to 73 residues: Small ribosomal subunit protein bS18c (73 aa).

The protein belongs to the bacterial ribosomal protein bS18 family. As to quaternary structure, part of the 30S ribosomal subunit.

The protein localises to the plastid. It localises to the chloroplast. In Nephroselmis olivacea (Green alga), this protein is Small ribosomal subunit protein bS18c.